Here is a 941-residue protein sequence, read N- to C-terminus: Isoleucine--tRNA ligase (941 aa).

The 'HIGH' region motif lies at 59–69; it reads PYANGNIHIGH. Glutamate 562 contacts L-isoleucyl-5'-AMP. A 'KMSKS' region motif is present at residues 603-607; the sequence is KMSKS. An ATP-binding site is contributed by lysine 606. Zn(2+)-binding residues include cysteine 904, cysteine 907, cysteine 924, and cysteine 927.

It belongs to the class-I aminoacyl-tRNA synthetase family. IleS type 1 subfamily. In terms of assembly, monomer. Zn(2+) is required as a cofactor.

It localises to the cytoplasm. The enzyme catalyses tRNA(Ile) + L-isoleucine + ATP = L-isoleucyl-tRNA(Ile) + AMP + diphosphate. Functionally, catalyzes the attachment of isoleucine to tRNA(Ile). As IleRS can inadvertently accommodate and process structurally similar amino acids such as valine, to avoid such errors it has two additional distinct tRNA(Ile)-dependent editing activities. One activity is designated as 'pretransfer' editing and involves the hydrolysis of activated Val-AMP. The other activity is designated 'posttransfer' editing and involves deacylation of mischarged Val-tRNA(Ile). This is Isoleucine--tRNA ligase from Haemophilus influenzae (strain 86-028NP).